The chain runs to 268 residues: Hydroxyethylthiazole kinase (268 aa).

Methionine 47 is a substrate binding site. Positions 123 and 170 each coordinate ATP. Alanine 196 contributes to the substrate binding site.

It belongs to the Thz kinase family. Mg(2+) is required as a cofactor.

It carries out the reaction 5-(2-hydroxyethyl)-4-methylthiazole + ATP = 4-methyl-5-(2-phosphooxyethyl)-thiazole + ADP + H(+). Its pathway is cofactor biosynthesis; thiamine diphosphate biosynthesis; 4-methyl-5-(2-phosphoethyl)-thiazole from 5-(2-hydroxyethyl)-4-methylthiazole: step 1/1. Functionally, catalyzes the phosphorylation of the hydroxyl group of 4-methyl-5-beta-hydroxyethylthiazole (THZ). In Finegoldia magna (strain ATCC 29328 / DSM 20472 / WAL 2508) (Peptostreptococcus magnus), this protein is Hydroxyethylthiazole kinase.